The following is a 382-amino-acid chain: D-alanine--D-alanine ligase (382 aa).

Positions 161 to 372 (KVVFEAAGLQ…YAELIDELIY (212 aa)) constitute an ATP-grasp domain. 193–248 (VDRLGYPVFVKPARAGSSMGISKVDSLEGLDAAIAAAREHDLKLVIEAGIVGREIE) serves as a coordination point for ATP. Residues Asp326, Glu339, and Asn341 each contribute to the Mg(2+) site.

Belongs to the D-alanine--D-alanine ligase family. Requires Mg(2+) as cofactor. Mn(2+) is required as a cofactor.

Its subcellular location is the cytoplasm. It carries out the reaction 2 D-alanine + ATP = D-alanyl-D-alanine + ADP + phosphate + H(+). It participates in cell wall biogenesis; peptidoglycan biosynthesis. In terms of biological role, cell wall formation. The protein is D-alanine--D-alanine ligase of Arthrobacter sp. (strain FB24).